Consider the following 292-residue polypeptide: RNA 5'-monophosphate methyltransferase (292 aa).

Residues 1-21 (MAVPTELDGGSVKETAAEEES) are disordered. Residues arginine 46, asparagine 76, aspartate 110, 135–136 (DF), and methionine 164 each bind S-adenosyl-L-methionine. Positions 53 to 274 (ELLRQLFPES…KQTIETHPIP (222 aa)) constitute a Bin3-type SAM domain.

It belongs to the methyltransferase superfamily. In terms of assembly, interacts with DICER1; the interaction may be mediated by RNA.

Its subcellular location is the cytoplasm. The enzyme catalyses a 5'-end 5'-phospho-ribonucleoside-RNA + S-adenosyl-L-methionine = a 5'-end (5'-methylphospho)-ribonucleoside-RNA + S-adenosyl-L-homocysteine. It carries out the reaction a 5'-end 5'-phospho-ribonucleoside-RNA + 2 S-adenosyl-L-methionine = a 5'-end (5'-bismethylphospho)-ribonucleoside-RNA + 2 S-adenosyl-L-homocysteine. In terms of biological role, O-methyltransferase that specifically monomethylates 5'-monophosphate of cytoplasmic histidyl tRNA (tRNA(His)), acting as a capping enzyme by protecting tRNA(His) from cleavage by DICER1. Also able, with less efficiently, to methylate the 5' monophosphate of a subset of pre-miRNAs, acting as a negative regulator of miRNA processing. The 5' monophosphate of pre-miRNAs is recognized by DICER1 and is required for pre-miRNAs processing: methylation at this position reduces the processing of pre-miRNAs by DICER1. Was also reported to mediate dimethylation of pre-miR-145; however dimethylation cannot be reproduced by another group which observes a monomethylation of pre-miR-145. This chain is RNA 5'-monophosphate methyltransferase, found in Homo sapiens (Human).